The following is a 470-amino-acid chain: MSSQQHKFKRPDVSVRDKKLDTLNVQLKKIDTEIGLIRKQIDQHQVNDTTQQERKKLQDKNKEIIKIQADLKTRRSNIHDSIKQLDAQIKRKNNQIEEKLGKKAKFSSTAEAKQRINEIEESIASGDLSLVQEKLLVKEMQSLNKLIKDLVNIEPIRKSVDADKAKINQLKEELNGLNPKDVSNQFEENQQKLNDIHSKTQGVYDKRQTLFNKRAALYKKRDELYSQIRQIRADFDNEFKSFRAKLDKERLKREEEQRLSKLLEQKDVDMGKLQEKLTHAKIPAFTYEIGAIENSLLVLDPTYVKPKKNILPDLSSNALETKPARKVVADDLVLVTPKKDDFVNVAPSKSKKYKKKNQQKNTENEQPASIFNKVDGKFTLEPTLIATLAELDVTVPINSDDVKITVEQLKKKHEELLSKQEEQTKQNIESVEKEIEKLNLDYSNKEQQVKKELEEKRLKEQEESEKDKEN.

Coiled coils occupy residues 17–178 (DKKL…NGLN) and 237–281 (NEFK…THAK). Ser260 is subject to Phosphoserine. Position 336 is a phosphothreonine (Thr336). Residues 346-368 (APSKSKKYKKKNQQKNTENEQPA) form a disordered region. Over residues 349–358 (KSKKYKKKNQ) the composition is skewed to basic residues. Ser369 is subject to Phosphoserine. The stretch at 398-469 (NSDDVKITVE…EQEESEKDKE (72 aa)) forms a coiled coil. A disordered region spans residues 447–470 (QQVKKELEEKRLKEQEESEKDKEN).

Its function is as follows. Implicated in secretion, nuclear segregation and in maintenance of cell size. This is Nuclear segregation protein BFR1 (BFR1) from Saccharomyces cerevisiae (strain ATCC 204508 / S288c) (Baker's yeast).